We begin with the raw amino-acid sequence, 872 residues long: Cilia- and flagella-associated protein 58 (872 aa).

2 coiled-coil regions span residues 106–595 and 642–839; these read VDSA…ADGE and ESQY…QKNK.

It belongs to the CFAP58 family. Interacts with ODFP2.

The protein resides in the cell projection. It localises to the cilium. The protein localises to the flagellum. It is found in the cytoplasm. Its subcellular location is the cytoskeleton. The protein resides in the microtubule organizing center. It localises to the centrosome. Has an essential role in the assembly and organization of the sperm flagellar axoneme. Required for the elongation of the primary cilium and sperm flagellar midpiece via modulation of the Notch signaling pathway. The polypeptide is Cilia- and flagella-associated protein 58 (Homo sapiens (Human)).